The following is a 306-amino-acid chain: MNLSTRVMLNRLTQQCVYKRIVTFSTKTAEHVIENQEEQKKEAPPTTPTSPVNRKTIIPANYRFVYPEFLPDPKVEWRNLVREKLERLDMLDRRKQIDLPEFYVGSVLAVTSSDPHAAGKTSRFVGICINRDRCGLRARFILRNVIDHQGMEVVYELYDPTILKIEVLRLEKRLDDSLFYLRDALPEYSTFDENMEAEPLEEGAPVPVNDIKVVLRPRPWLERWERQNLRGVANIDEYLKDKHRLSAAKVQKPWEKYDMMKDYRSSIPEEEQTEIFAEVHTELHALELQRKRNKRKRTFIKPKQLA.

The segment covering 34–43 has biased composition (basic and acidic residues); sequence ENQEEQKKEA. The tract at residues 34–53 is disordered; sequence ENQEEQKKEAPPTTPTSPVN.

This sequence belongs to the bacterial ribosomal protein bL19 family. As to quaternary structure, component of the mitochondrial ribosome large subunit (39S) which comprises a 16S rRNA and about 50 distinct proteins.

The protein resides in the mitochondrion. This chain is Large ribosomal subunit protein bL19m (mRpL19), found in Drosophila melanogaster (Fruit fly).